The primary structure comprises 124 residues: Small ribosomal subunit protein uS12 (124 aa).

D89 carries the 3-methylthioaspartic acid modification.

The protein belongs to the universal ribosomal protein uS12 family. As to quaternary structure, part of the 30S ribosomal subunit. Contacts proteins S8 and S17. May interact with IF1 in the 30S initiation complex.

Functionally, with S4 and S5 plays an important role in translational accuracy. Interacts with and stabilizes bases of the 16S rRNA that are involved in tRNA selection in the A site and with the mRNA backbone. Located at the interface of the 30S and 50S subunits, it traverses the body of the 30S subunit contacting proteins on the other side and probably holding the rRNA structure together. The combined cluster of proteins S8, S12 and S17 appears to hold together the shoulder and platform of the 30S subunit. The sequence is that of Small ribosomal subunit protein uS12 from Koribacter versatilis (strain Ellin345).